The primary structure comprises 26 residues: Acetylcholine receptor subunit delta (26 aa).

The protein belongs to the ligand-gated ion channel (TC 1.A.9) family. Acetylcholine receptor (TC 1.A.9.1) subfamily. As to quaternary structure, pentamer of two alpha chains, and one each of the beta, delta, and gamma chains.

It localises to the postsynaptic cell membrane. The protein resides in the cell membrane. It catalyses the reaction K(+)(in) = K(+)(out). The enzyme catalyses Na(+)(in) = Na(+)(out). After binding acetylcholine, the AChR responds by an extensive change in conformation that affects all subunits and leads to opening of an ion-conducting channel across the plasma membrane. This chain is Acetylcholine receptor subunit delta (chrnd), found in Electrophorus electricus (Electric eel).